A 172-amino-acid polypeptide reads, in one-letter code: MLSDKLKDKIGNYQDFPTTGILFRDITPILRDQKLFSELIEKMSESDILKKADCLVAIDARGFIFGSSIALNLSKPFILARKPGKLPGELIQSSYKLEYGENSLVFQLDSLKNFKSFGIIDDLLATGGTVNAVANLLNQKNKIITGLSVVVELTELNARSNFNFEVSSEVKY.

The protein belongs to the purine/pyrimidine phosphoribosyltransferase family. In terms of assembly, homodimer.

The protein resides in the cytoplasm. The enzyme catalyses AMP + diphosphate = 5-phospho-alpha-D-ribose 1-diphosphate + adenine. The protein operates within purine metabolism; AMP biosynthesis via salvage pathway; AMP from adenine: step 1/1. Functionally, catalyzes a salvage reaction resulting in the formation of AMP, that is energically less costly than de novo synthesis. This is Adenine phosphoribosyltransferase from Prochlorococcus marinus (strain MIT 9215).